Consider the following 605-residue polypeptide: YTH domain-containing protein ECT4 (605 aa).

Disordered stretches follow at residues 249-274 (GVAS…SNSH) and 357-384 (ELNR…QTFD). Residues 256-274 (KANNNVPATRNQNSSSNSH) are compositionally biased toward polar residues. Residues 368 to 383 (KATEEVSSEEVKKQTF) show a composition bias toward basic and acidic residues. A YTH domain is found at 414–551 (AKFFIIKSYS…EQGLKVVKIF (138 aa)). Residues 420–422 (KSY), Asp426, 436–437 (WA), Asn469, Trp493, Trp498, and Trp506 each bind RNA. A disordered region spans residues 580 to 605 (KQQQSQKQVWEGKTNDEKPGTVDSTM).

In terms of tissue distribution, expressed in the shoot apex, at the sites of leaf formation, and in emerging leaves.

It is found in the cytoplasm. Functionally, specifically recognizes and binds N6-methyladenosine (m6A)-containing RNAs, and regulates mRNA stability. M6A is a modification present at internal sites of mRNAs and some non-coding RNAs and plays a role in mRNA stability and processing. Required for the correct timing of leaf formation and normal leaf morphology. This is YTH domain-containing protein ECT4 from Arabidopsis thaliana (Mouse-ear cress).